The primary structure comprises 877 residues: MKKRIDYLSNKQNKYSIRRFTVGTTSVIVGATILFGIGNHQAQASEQSNDTTQSSKNNASADSEKNNMIETPQLNTTANDTSDISANTNSANVDSTTKPMSTQTSNTTTTEPASTNETPQPTAIKNQATAAKMQDQTVPQEANSQVDNKTTNDANSIATNSELKNSQTLDLPQSSPQTISNAQGTSKPSVRTRAVRSLAVAEPVVNAADAKGTNVNDKVTASNFKLEKTTFDPNQSGNTFMAANFTVTDKVKSGDYFTAKLPDSLTGNGDVDYSNSNNTMPIADIKSTNGDVVAKATYDILTKTYTFVFTDYVNNKENINGQFSLPLFTDRAKAPKSGTYDANINIADEMFNNKITYNYSSPIAGIDKPNGANISSQIIGVDTASGQNTYKQTVFVNPKQRVLGNTWVYIKGYQDKIEESSGKVSATDTKLRIFEVNDTSKLSDSYYADPNDSNLKEVTDQFKNRIYYEHPNVASIKFGDITKTYVVLVEGHYDNTGKNLKTQVIQENVDPVTNRDYSIFGWNNENVVRYGGGSADGDSAVNPKDPTPGPPVDPEPSPDPEPEPTPDPEPSPDPEPEPSPDPDPDSDSDSDSGSDSDSGSDSDSESDSDSDSDSDSDSDSDSESDSDSESDSESDSDSDSDSDSDSDSDSDSDSDSDSDSDSDSDSDSDSDSDSDSDSDSDSDSDSDSDSDSDSDSDSDSDSDSDSDSDSDSDSDSDSDSDSDSDSDSDSDSDSDSDSDSDSDSDSDSDSDSDSDSDSDSDSDSDSDSDSDSDSDSDSDSDSDSDSDSDSDSDSDSDSDSDSDSRVTPPNNEQKAPSNPKGEVNHSNKVSKQHKTDALPETGDKSENTNATLFGAMMALLGSLLLFRKRKQDHKEKA.

The first 44 residues, 1–44 (MKKRIDYLSNKQNKYSIRRFTVGTTSVIVGATILFGIGNHQAQA), serve as a signal peptide directing secretion. The YSIRK-G/S signaling motif motif lies at 15 to 26 (YSIRRFTVGTTS). 2 stretches are compositionally biased toward polar residues: residues 44–61 (ASEQ…NASA) and 68–95 (MIET…NVDS). A disordered region spans residues 44–192 (ASEQSNDTTQ…QGTSKPSVRT (149 aa)). The segment at 45–542 (SEQSNDTTQS…GSADGDSAVN (498 aa)) is ligand binding A region. Over residues 96 to 119 (TTKPMSTQTSNTTTTEPASTNETP) the composition is skewed to low complexity. Residues 120–189 (QPTAIKNQAT…SNAQGTSKPS (70 aa)) show a composition bias toward polar residues. The short motif at 272–276 (DYSNS) is the MIDAS-like motif element. The disordered stretch occupies residues 530–849 (YGGGSADGDS…ETGDKSENTN (320 aa)). The span at 545–555 (DPTPGPPVDPE) shows a compositional bias: pro residues. Residues 556 to 801 (PSPDPEPEPT…SDSDSDSDSD (246 aa)) show a composition bias toward acidic residues. Residues 805–816 (RVTPPNNEQKAP) show a composition bias toward polar residues. The span at 833 to 846 (HKTDALPETGDKSE) shows a compositional bias: basic and acidic residues. Residues 838–842 (LPETG) carry the LPXTG sorting signal motif. Thr-841 is subject to Pentaglycyl murein peptidoglycan amidated threonine. The propeptide at 842–877 (GDKSENTNATLFGAMMALLGSLLLFRKRKQDHKEKA) is removed by sortase.

Belongs to the serine-aspartate repeat-containing protein (SDr) family. Post-translationally, proteolytically cleaved by aureolysin (aur). This cleavage leads to the inactivation of ClfB.

Its subcellular location is the secreted. It is found in the cell wall. Functionally, cell surface-associated protein implicated in virulence by promoting bacterial attachment to both alpha- and beta-chains of human fibrinogen and inducing the formation of bacterial clumps. Partly responsible for mediating bacterial attachment to the highly keratinized squamous epithelial cells from the nasal cavity via an interaction with cytokeratin K10 (K10). Also promotes bacterial attachment to cultured keratinocytes, possibly through an interaction with cytokeratin K10. Binds mouse cytokeratin K10. Activates human platelet aggregation. The protein is Clumping factor B (clfB) of Staphylococcus aureus (strain NCTC 8325 / PS 47).